The primary structure comprises 213 residues: G2/mitotic-specific cyclin-1 (213 aa).

Residues 1-23 (MKFSEEKNVSNNPTNFEGGLDSR) are disordered.

This sequence belongs to the cyclin family. Cyclin AB subfamily. Interacts with the CDC2 protein kinase to form a serine/threonine kinase holoenzyme complex also known as maturation promoting factor (MPF). The cyclin subunit imparts substrate specificity to the complex. In terms of tissue distribution, only expressed in organs with dividing cells.

Functionally, essential for the control of the cell cycle at the G2/M (mitosis) transition. The protein is G2/mitotic-specific cyclin-1 of Medicago sativa (Alfalfa).